Reading from the N-terminus, the 287-residue chain is Cyclopropane mycolic acid synthase MmaA2 (287 aa).

S-adenosyl-L-methionine-binding positions include 33 to 34, 72 to 74, 94 to 99, 123 to 124, and isoleucine 136; these read YS, GCG, TLSKNQ, and WE. Cysteine 269 is an active-site residue.

This sequence belongs to the CFA/CMAS family.

The enzyme catalyses a 1-acyl-2-(9Z)-enoyl-sn-glycero-3-phospholipid + S-adenosyl-L-methionine = a 1-acyl-2-(9-cyclopronane)-acyl-sn-glycero-3-phospholipid + S-adenosyl-L-homocysteine + H(+). It participates in lipid metabolism; mycolic acid biosynthesis. In terms of biological role, catalyzes the conversion of a double bond to a cis cyclopropane ring at the distal position of an alpha mycolic acid via the transfer of a methylene group from S-adenosyl-L-methionine. MmaA2 also catalyzes the biosynthesis of the cis-cyclopropanated methoxymycolates. Cyclopropanated mycolic acids are key factors participating in cell envelope permeability, host immunomodulation and persistence. The polypeptide is Cyclopropane mycolic acid synthase MmaA2 (cmaC) (Mycobacterium bovis (strain ATCC BAA-935 / AF2122/97)).